Here is a 269-residue protein sequence, read N- to C-terminus: Formamidopyrimidine-DNA glycosylase (269 aa).

Pro2 acts as the Schiff-base intermediate with DNA in catalysis. Glu3 (proton donor) is an active-site residue. Lys57 (proton donor; for beta-elimination activity) is an active-site residue. DNA is bound by residues His90, Arg109, and Lys150. An FPG-type zinc finger spans residues 235-269 (QVYGRKGEPCRVCGTPIVATKHAQRATFYCRHCQK). The Proton donor; for delta-elimination activity role is filled by Arg259.

This sequence belongs to the FPG family. As to quaternary structure, monomer. Zn(2+) is required as a cofactor.

The catalysed reaction is Hydrolysis of DNA containing ring-opened 7-methylguanine residues, releasing 2,6-diamino-4-hydroxy-5-(N-methyl)formamidopyrimidine.. It carries out the reaction 2'-deoxyribonucleotide-(2'-deoxyribose 5'-phosphate)-2'-deoxyribonucleotide-DNA = a 3'-end 2'-deoxyribonucleotide-(2,3-dehydro-2,3-deoxyribose 5'-phosphate)-DNA + a 5'-end 5'-phospho-2'-deoxyribonucleoside-DNA + H(+). Its function is as follows. Involved in base excision repair of DNA damaged by oxidation or by mutagenic agents. Acts as a DNA glycosylase that recognizes and removes damaged bases. Has a preference for oxidized purines, such as 7,8-dihydro-8-oxoguanine (8-oxoG). Has AP (apurinic/apyrimidinic) lyase activity and introduces nicks in the DNA strand. Cleaves the DNA backbone by beta-delta elimination to generate a single-strand break at the site of the removed base with both 3'- and 5'-phosphates. This chain is Formamidopyrimidine-DNA glycosylase, found in Salmonella choleraesuis (strain SC-B67).